The sequence spans 151 residues: Putative pre-16S rRNA nuclease (151 aa).

Belongs to the YqgF nuclease family.

The protein resides in the cytoplasm. Functionally, could be a nuclease involved in processing of the 5'-end of pre-16S rRNA. The polypeptide is Putative pre-16S rRNA nuclease (Bifidobacterium longum subsp. infantis (strain ATCC 15697 / DSM 20088 / JCM 1222 / NCTC 11817 / S12)).